Reading from the N-terminus, the 160-residue chain is SsrA-binding protein (160 aa).

Positions 133–160 (GKKLHDKRDTEKERDWKREQQRLLRDRG) are disordered. A compositionally biased stretch (basic and acidic residues) spans 138 to 160 (DKRDTEKERDWKREQQRLLRDRG).

Belongs to the SmpB family.

The protein localises to the cytoplasm. In terms of biological role, required for rescue of stalled ribosomes mediated by trans-translation. Binds to transfer-messenger RNA (tmRNA), required for stable association of tmRNA with ribosomes. tmRNA and SmpB together mimic tRNA shape, replacing the anticodon stem-loop with SmpB. tmRNA is encoded by the ssrA gene; the 2 termini fold to resemble tRNA(Ala) and it encodes a 'tag peptide', a short internal open reading frame. During trans-translation Ala-aminoacylated tmRNA acts like a tRNA, entering the A-site of stalled ribosomes, displacing the stalled mRNA. The ribosome then switches to translate the ORF on the tmRNA; the nascent peptide is terminated with the 'tag peptide' encoded by the tmRNA and targeted for degradation. The ribosome is freed to recommence translation, which seems to be the essential function of trans-translation. The sequence is that of SsrA-binding protein from Rhizorhabdus wittichii (strain DSM 6014 / CCUG 31198 / JCM 15750 / NBRC 105917 / EY 4224 / RW1) (Sphingomonas wittichii).